The following is a 242-amino-acid chain: MAAPTAKVSRGWSGLALGVRIAVLRLPGLTQVRWSRYGPEYQDPQIDKEYYRKPLAQLTEEETYERELRKTQVIKAAPATKTSSVFEDPVISKFTNMMMKGGNKILARSLMTQTLEAVKRKQFEKYHAASAEEQATVERNPYTIFHQALKNCEPVIGLVPILKGGHFYQVPVPLAERRRRFLAMKWMITECREKKPRRMLMPEKLSQELLEAFCNRGPVIKRKHDMHKMAEANRALAHYRWW.

The transit peptide at 1–37 (MAAPTAKVSRGWSGLALGVRIAVLRLPGLTQVRWSRY) directs the protein to the mitochondrion. Lys-228 is subject to N6-acetyllysine.

The protein belongs to the universal ribosomal protein uS7 family. In terms of assembly, component of the mitochondrial ribosome small subunit (28S) which comprises a 12S rRNA and about 30 distinct proteins.

It localises to the mitochondrion. The polypeptide is Small ribosomal subunit protein uS7m (MRPS7) (Bos taurus (Bovine)).